Consider the following 148-residue polypeptide: D-aminoacyl-tRNA deacylase (148 aa).

The Gly-cisPro motif, important for rejection of L-amino acids signature appears at 137–138 (GP).

This sequence belongs to the DTD family. Homodimer.

The protein resides in the cytoplasm. It carries out the reaction glycyl-tRNA(Ala) + H2O = tRNA(Ala) + glycine + H(+). The enzyme catalyses a D-aminoacyl-tRNA + H2O = a tRNA + a D-alpha-amino acid + H(+). In terms of biological role, an aminoacyl-tRNA editing enzyme that deacylates mischarged D-aminoacyl-tRNAs. Also deacylates mischarged glycyl-tRNA(Ala), protecting cells against glycine mischarging by AlaRS. Acts via tRNA-based rather than protein-based catalysis; rejects L-amino acids rather than detecting D-amino acids in the active site. By recycling D-aminoacyl-tRNA to D-amino acids and free tRNA molecules, this enzyme counteracts the toxicity associated with the formation of D-aminoacyl-tRNA entities in vivo and helps enforce protein L-homochirality. The protein is D-aminoacyl-tRNA deacylase of Finegoldia magna (strain ATCC 29328 / DSM 20472 / WAL 2508) (Peptostreptococcus magnus).